The following is a 97-amino-acid chain: YcgL domain-containing protein PFLU_1517 (97 aa).

The 85-residue stretch at R3–P87 folds into the YcgL domain.

The chain is YcgL domain-containing protein PFLU_1517 from Pseudomonas fluorescens (strain SBW25).